A 265-amino-acid chain; its full sequence is Early E4 31 kDa protein (265 aa).

This sequence belongs to the adenoviridae E4 30 to 34 kDa protein family. In terms of assembly, interacts with E1B-55k.

The protein resides in the host nucleus. Its subcellular location is the host cytoplasm. Functionally, plays a major role to prevent cellular inhibition of viral genome replication by nuclear bodies. Assembles an SCF-like E3 ubiquitin ligase complex based on the cellular proteins ELOB, ELOC, CUL5 and RBX1, in cooperation with viral E1B-55K. This viral RING-type ligase ubiquitinates cellular substrates prior to proteasomal degradation: p53/TP53, LIG4, MRE11-RAD50-NBS1 (MRN) complex, ITGA3, DAXX and BLM. The polypeptide is Early E4 31 kDa protein (Canis lupus familiaris (Dog)).